Here is a 51-residue protein sequence, read N- to C-terminus: UPF0391 membrane protein Mbur_2216 (51 aa).

A run of 2 helical transmembrane segments spans residues methionine 1–leucine 21 and methionine 31–leucine 51.

It belongs to the UPF0391 family.

It is found in the cell membrane. The protein is UPF0391 membrane protein Mbur_2216 of Methanococcoides burtonii (strain DSM 6242 / NBRC 107633 / OCM 468 / ACE-M).